Here is a 201-residue protein sequence, read N- to C-terminus: Small ribosomal subunit protein uS4c (201 aa).

The S4 RNA-binding domain maps to 91–153; sequence MRLDNIVFRL…NASKKIVETN (63 aa).

The protein belongs to the universal ribosomal protein uS4 family. Part of the 30S ribosomal subunit. Contacts protein S5. The interaction surface between S4 and S5 is involved in control of translational fidelity.

It localises to the plastid. The protein resides in the cyanelle. One of the primary rRNA binding proteins, it binds directly to 16S rRNA where it nucleates assembly of the body of the 30S subunit. In terms of biological role, with S5 and S12 plays an important role in translational accuracy. This chain is Small ribosomal subunit protein uS4c (rps4), found in Cyanophora paradoxa.